A 325-amino-acid polypeptide reads, in one-letter code: Probable serine/threonine-protein phosphatase 2A activator 1 (325 aa).

The protein belongs to the PTPA-type PPIase family.

The protein localises to the cytoplasm. It carries out the reaction [protein]-peptidylproline (omega=180) = [protein]-peptidylproline (omega=0). PPIases accelerate the folding of proteins. It catalyzes the cis-trans isomerization of proline imidic peptide bonds in oligopeptides. Acts as a regulatory subunit for PP2A-like phosphatases modulating their activity or substrate specificity, probably by inducing a conformational change in the catalytic subunit, a direct target of the PPIase. The protein is Probable serine/threonine-protein phosphatase 2A activator 1 (ppp2r4A) of Dictyostelium discoideum (Social amoeba).